Reading from the N-terminus, the 458-residue chain is Protochlorophyllide reductase, chloroplastic (458 aa).

It belongs to the short-chain dehydrogenases/reductases (SDR) family. POR subfamily.

Its subcellular location is the plastid. The protein resides in the chloroplast. It carries out the reaction chlorophyllide a + NADP(+) = protochlorophyllide a + NADPH + H(+). The protein operates within porphyrin-containing compound metabolism; chlorophyll biosynthesis. Its function is as follows. Phototransformation of protochlorophyllide (Pchlide) to chlorophyllide (Chlide). The polypeptide is Protochlorophyllide reductase, chloroplastic (PORA) (Marchantia paleacea (Liverwort)).